An 869-amino-acid polypeptide reads, in one-letter code: TATA box-binding protein-associated factor RNA polymerase I subunit C (869 aa).

Disordered stretches follow at residues 605 to 629 and 729 to 869; these read SSLR…ASWT and GAAW…RMGF. Residue threonine 834 is modified to Phosphothreonine. A compositionally biased stretch (polar residues) spans 835-860; that stretch reads PPHSQASSVRATRSQQHTPVLSSSQP. A Phosphoserine modification is found at serine 848.

As to quaternary structure, component of the transcription factor SL1/TIF-IB complex, composed of TBP and at least TAF1A, TAF1B, TAF1C and TAF1D. In the complex interacts directly with TBP, TAF1A and TAF1B. Interaction of the SL1/TIF-IB subunits with TBP excludes interaction of TBP with the transcription factor IID (TFIID) subunits. Interacts with MYC and RRN3. Interacts with p53/TP53; the interaction prevents the association of SL1/TIF-IB with UBTF and represses RNA polymerase I transcription. Part of Pol I pre-initiation complex (PIC), in which Pol I core assembles with RRN3 and promoter-bound UTBF and SL1/TIF-IB complex.

It is found in the nucleus. The protein localises to the nucleolus. Component of the transcription factor SL1/TIF-IB complex, which is involved in the assembly of the PIC (pre-initiation complex) during RNA polymerase I-dependent transcription. The rate of PIC formation probably is primarily dependent on the rate of association of SL1/TIF-IB with the rDNA promoter. SL1/TIF-IB is involved in stabilization of nucleolar transcription factor 1/UBTF on rDNA. Formation of SL1/TIF-IB excludes the association of TBP with TFIID subunits. Recruits RNA polymerase I to the rRNA gene promoter via interaction with RRN3. This chain is TATA box-binding protein-associated factor RNA polymerase I subunit C (TAF1C), found in Homo sapiens (Human).